A 1544-amino-acid chain; its full sequence is Zinc finger protein GLI2 (1544 aa).

The disordered stretch occupies residues 1 to 26 (METSAPAPALEKKEAKSGLLEDSSFP). Residues S145, S230, S232, and S238 each carry the phosphoserine modification. A disordered region spans residues 338 to 364 (SSSSSNCLNDANQNKQNSESAVSSTVN). Residue S385 is modified to Phosphoserine; by DYRK2. Residues 417 to 444 (TNCHWADCTKEYDTQEQLVHHINNEHIH) form a C2H2-type 1 zinc finger. Residues 455-477 (QACTREQKPFKAQYMLVVHMRRH) form a C2H2-type 2; degenerate zinc finger. C2H2-type zinc fingers lie at residues 483 to 507 (HKCT…LRSH), 513 to 538 (YVCE…NRTH), and 544 to 569 (YICK…KTVH). Disordered stretches follow at residues 557–619 (DPSS…TSHT) and 635–682 (GLCQ…ALAD). Over residues 569-585 (HGPDAHVTKKQRNDVHV) the composition is skewed to basic and acidic residues. Residues 637-657 (CQSSPGAQSSCSSEPSPLGSA) are compositionally biased toward low complexity. S707 carries the phosphoserine modification. T708 is subject to Phosphothreonine. The residue at position 740 (K740) is an N6-acetyllysine; by EP300. Disordered regions lie at residues 781 to 800 (SQLQ…AYTV), 805 to 861 (SGIS…PGLL), 908 to 963 (ALPG…RRPD), 995 to 1016 (VQSH…RPPS), 1166 to 1220 (FGQY…CLGM), and 1422 to 1457 (GGCP…VSST). 2 stretches are compositionally biased toward polar residues: residues 790-800 (STSTMSSAYTV) and 805-814 (SGISPYFSSR). Residues 954–963 (RASDPVRRPD) show a composition bias toward basic and acidic residues. Phosphoserine; by DYRK2 is present on S997. Polar residues-rich tracts occupy residues 997–1009 (SHPS…TRNA), 1173–1190 (NPQS…TQPH), and 1200–1209 (SRGSYTQQPR).

The protein belongs to the GLI C2H2-type zinc-finger protein family. Interacts with ZIC1 and ZIC2. Interacts with STK36. Interacts with SUFU; this inhibits transcriptional activation mediated by GLI2. Interacts (via C-terminal internal region) with FOXC1 (via N-terminus); this interaction is direct and increases GLI2 DNA-binding and transcriptional activity through a smoothened (SMO)-independent Hedgehog (Hh) signaling pathway. In terms of processing, phosphorylated in vitro by ULK3. Phosphorylated by DYRK2; this inhibits GLI2 transcription factor activity and promotes proteasomal degradation of GLI2. Post-translationally, acetylation at Lys-740 inhibits Hh target gene expression, probably by impeding entry into chromatin thus preventing promoter occupancy.

The protein localises to the nucleus. It is found in the cytoplasm. It localises to the cell projection. The protein resides in the cilium. In terms of biological role, functions as a transcription regulator in the hedgehog (Hh) pathway. Functions as a transcriptional activator. May also function as transcriptional repressor. Requires STK36 for full transcriptional activator activity. Binds to the DNA sequence 5'-GAACCACCCA-3' which is part of the TRE-2S regulatory element. Is involved in the smoothened (SHH) signaling pathway. Required for normal skeleton development. In Mus musculus (Mouse), this protein is Zinc finger protein GLI2.